A 302-amino-acid chain; its full sequence is Sulfate adenylyltransferase subunit 2 (302 aa).

The protein belongs to the PAPS reductase family. CysD subfamily. In terms of assembly, heterodimer composed of CysD, the smaller subunit, and CysN.

It catalyses the reaction sulfate + ATP + H(+) = adenosine 5'-phosphosulfate + diphosphate. It participates in sulfur metabolism; hydrogen sulfide biosynthesis; sulfite from sulfate: step 1/3. Functionally, with CysN forms the ATP sulfurylase (ATPS) that catalyzes the adenylation of sulfate producing adenosine 5'-phosphosulfate (APS) and diphosphate, the first enzymatic step in sulfur assimilation pathway. APS synthesis involves the formation of a high-energy phosphoric-sulfuric acid anhydride bond driven by GTP hydrolysis by CysN coupled to ATP hydrolysis by CysD. This is Sulfate adenylyltransferase subunit 2 from Parabacteroides distasonis (strain ATCC 8503 / DSM 20701 / CIP 104284 / JCM 5825 / NCTC 11152).